Here is a 601-residue protein sequence, read N- to C-terminus: Glutamine--tRNA ligase (601 aa).

A 'HIGH' region motif is present at residues 76–86; the sequence is PEPNGYLHIGH. ATP contacts are provided by residues 77–79 and 83–89; these read EPN and HIGHAKS. L-glutamine is bound by residues D109 and Y253. ATP contacts are provided by residues T272, 301 to 302, and 309 to 311; these read RL and MSK. The 'KMSKS' region motif lies at 308–312; the sequence is VMSKR.

This sequence belongs to the class-I aminoacyl-tRNA synthetase family. In terms of assembly, monomer.

It is found in the cytoplasm. The catalysed reaction is tRNA(Gln) + L-glutamine + ATP = L-glutaminyl-tRNA(Gln) + AMP + diphosphate. The polypeptide is Glutamine--tRNA ligase (Rhodopirellula baltica (strain DSM 10527 / NCIMB 13988 / SH1)).